A 261-amino-acid chain; its full sequence is MSDSISVIREKLNQVTSEHDPFFRKCMQDERKGVEKLLETTRRKWEKEAQLRNKLEEMKQYETDLFQQGYKYIAGVDEVGRGPLAGPVVAAAVILPADFSVVGINDSKQLSEAKRDALFETIKKEAIAIGVGIIEHDVIDQVNIYEATKLAMREALDQLTPEPDFVLIDAMPLRYTEAELSLIKGDTKSISIAAASIIAKVTRDRLMQMYDEKYPGYDFANNMGYGTKKHLLGLDTIGICPIHRISFAPVKEAKLHFDSLK.

Residues 71-259 (KYIAGVDEVG…VKEAKLHFDS (189 aa)) enclose the RNase H type-2 domain. Asp77, Glu78, and Asp169 together coordinate a divalent metal cation.

It belongs to the RNase HII family. The cofactor is Mn(2+). Requires Mg(2+) as cofactor.

The protein localises to the cytoplasm. The enzyme catalyses Endonucleolytic cleavage to 5'-phosphomonoester.. Functionally, endonuclease that specifically degrades the RNA of RNA-DNA hybrids. This chain is Ribonuclease HII, found in Listeria monocytogenes serotype 4b (strain F2365).